The sequence spans 191 residues: Oleosin 20.3 kDa (191 aa).

Residue Ala2 is modified to N-acetylalanine. Residues 2-54 form a polar region; sequence ANVDRDRRVHVDRTDKRVHQPNYEDDVGFGGYGGYGAGSDYKSRGPSTNQILA. 2 helical membrane-spanning segments follow: residues 52 to 72 and 99 to 119; these read ILAL…AGLT and LTIG…LTGL. The segment at 55 to 128 is hydrophobic; that stretch reads LIAGVPIGGT…LSSVSWVLNY (74 aa).

The protein belongs to the oleosin family.

It localises to the lipid droplet. The protein localises to the membrane. Functionally, may have a structural role to stabilize the lipid body during desiccation of the seed by preventing coalescence of the oil. Probably interacts with both lipid and phospholipid moieties of lipid bodies. May also provide recognition signals for specific lipase anchorage in lipolysis during seedling growth. This chain is Oleosin 20.3 kDa (OL2), found in Arabidopsis thaliana (Mouse-ear cress).